Here is a 122-residue protein sequence, read N- to C-terminus: Prefoldin subunit 1 (122 aa).

This sequence belongs to the prefoldin subunit beta family. As to quaternary structure, heterohexamer of two PFD-alpha type and four PFD-beta type subunits.

Its function is as follows. Binds specifically to cytosolic chaperonin (c-CPN) and transfers target proteins to it. Binds to nascent polypeptide chain and promotes folding in an environment in which there are many competing pathways for nonnative proteins. This Tetraodon nigroviridis (Spotted green pufferfish) protein is Prefoldin subunit 1 (pfdn1).